We begin with the raw amino-acid sequence, 1167 residues long: Rhoptry neck protein 2-like protein 2 (1167 aa).

A signal peptide spans Met-1 to Gly-20. At Lys-21–Lys-977 the chain is on the cytoplasmic side. Positions Gly-55–Ala-94 are disordered. Positions Met-68 to Arg-77 are enriched in basic and acidic residues. Residues Leu-978–Leu-998 form a helical membrane-spanning segment. The Extracellular segment spans residues Asp-999–Arg-1167. Cys-1015 and Cys-1026 are disulfide-bonded.

Belongs to the apicomplexan parasites RON2 family.

The protein localises to the secreted. It is found in the host cell membrane. Its function is as follows. May play a role in host cell invasion. The polypeptide is Rhoptry neck protein 2-like protein 2 (RON2L2) (Toxoplasma gondii (strain ATCC 50611 / Me49)).